The sequence spans 559 residues: Hepatocyte nuclear factor 1-beta-A (559 aa).

The interval 1–35 (MFANMVSKLTSLQQELLSALLDSGVTKDVLLQALE) is dimerization. Residues 5-36 (MVSKLTSLQQELLSALLDSGVTKDVLLQALED) enclose the HNF-p1 domain. The segment at 53-98 (MSPSGSKLSDTDSKPVFHTLTNGHSKGKLSGDEGSEDGDDYDTPPI) is disordered. A compositionally biased stretch (acidic residues) spans 85–94 (EGSEDGDDYD). The region spanning 100–195 (KELQSQNTEE…ILRQFNQATQ (96 aa)) is the POU-specific atypical domain. Residues 240–320 (LRRNRFKWGP…NRRKEEAFRQ (81 aa)) constitute a DNA-binding region (homeobox; HNF1-type). Composition is skewed to low complexity over residues 334–354 (LNSLLSHSSPHHPQTSSSPPS) and 370–381 (TSSTTINHHSSN). Positions 334 to 384 (LNSLLSHSSPHHPQTSSSPPSKMQGVRYSQQGPGEVTSSTTINHHSSNAMS) are disordered.

It belongs to the HNF1 homeobox family. Binds DNA as a dimer. Can form homodimer or heterodimer with HNF1-alpha. In terms of tissue distribution, during embryonic development, expressed dynamically in the developing hindbrain, kidney (pronephros), gut, liver and pancreas; expressed in both intermediate mesoderm (precursor to the kidney) and the caudal hindbrain (including rhombomeres r5 and r6) at 10 hpf with expression diminishing caudally by 14 hpf. Strongly expressed in adult kidney, gut, liver and swim bladder; weakly expressed in brain, eye, testis, ovary and heart.

Its subcellular location is the nucleus. In terms of biological role, transcription factor that binds to the inverted palindrome 5'-GTTAATNATTAAC-3'. Required for induction of rhombomere r5/r6 gene expression in the hindbrain. The polypeptide is Hepatocyte nuclear factor 1-beta-A (hnf1ba) (Danio rerio (Zebrafish)).